The sequence spans 186 residues: Chromophore lyase CpcS/CpeS 1 (186 aa).

It belongs to the CpcS/CpeS biliprotein lyase family.

Covalently attaches a chromophore to Cys residue(s) of phycobiliproteins. In Synechocystis sp. (strain ATCC 27184 / PCC 6803 / Kazusa), this protein is Chromophore lyase CpcS/CpeS 1.